Reading from the N-terminus, the 175-residue chain is Protein FAM89A (175 aa).

The segment at 141–175 (FQEQGSLQDGQHHGSPRDQSPLTHLSSSDWILESI) is disordered. Residues 157-169 (RDQSPLTHLSSSD) are compositionally biased toward polar residues.

The protein belongs to the FAM89 family.

This chain is Protein FAM89A (Fam89a), found in Mus musculus (Mouse).